We begin with the raw amino-acid sequence, 647 residues long: RalBP1-associated Eps domain-containing protein 2 (647 aa).

Positions 21–122 constitute an EH 1 domain; sequence EQQCYSELFA…RTESIKCELP (102 aa). The segment at 156–233 is disordered; it reads EKNSFKRMDN…PSSEGPGAKP (78 aa). Basic and acidic residues predominate over residues 158–170; it reads NSFKRMDNEDKQE. The span at 221-230 shows a compositional bias: low complexity; that stretch reads PEGPSSEGPG. S239 is subject to Phosphoserine. The region spanning 268–359 is the EH 2 domain; it reads QREYYVNQFR…LQPEYLQAAF (92 aa). The 36-residue stretch at 301–336 folds into the EF-hand domain; the sequence is LSIPELSYIWELSDADCDGALTLSEFCAAFHLIVAR. D314, D316, D318, and E325 together coordinate Ca(2+). The interval 402–478 is disordered; sequence PTQDVTTADD…PRPQKTHSRA (77 aa). T466 is modified (phosphothreonine). Position 480 is a phosphoserine (S480). The disordered stretch occupies residues 492-568; that stretch reads PAANSGLLPP…PENQTTESQE (77 aa). Pro residues predominate over residues 499–510; that stretch reads LPPPPALPPRPC. The segment at 501–647 is interaction with RALBP1; that stretch reads PPPALPPRPC…LEQLRPVTVL (147 aa). Positions 524-539 are enriched in polar residues; the sequence is SQLNRAPSQAAESSPT. An interaction with ASAP1 region spans residues 548–647; that stretch reads PPSKPIRRKF…LEQLRPVTVL (100 aa). Residues 599-640 adopt a coiled-coil conformation; sequence IQTAIRKNKEANAVLARLNSELQQQLKEVHQERIALENQLEQ.

Interacts with EPN1. Interacts with EPS15 AND EPS15L1. Interacts with RALBP1; can form a ternary complex with activated Ral (RALA or RALB). Interacts with ASAP1; the interaction is direct and this complex can bind paxillin. Also forms a ternary complex with RALBP1 and ASAP1. Interacts with GRB2. Tyrosine-phosphorylated upon stimulation of cells with EGF. Phosphorylation on Tyr-residues induces its association with the EGF receptor probably indirectly through an adapter like GRB2.

It is found in the cytoplasm. Involved in ligand-dependent receptor mediated endocytosis of the EGF and insulin receptors as part of the Ral signaling pathway. By controlling growth factor receptors endocytosis may regulate cell survival. Through ASAP1 may regulate cell adhesion and migration. The protein is RalBP1-associated Eps domain-containing protein 2 (Reps2) of Mus musculus (Mouse).